An 848-amino-acid chain; its full sequence is DNA mismatch repair protein MutS (848 aa).

Residue 605–612 (GPNMAGKS) coordinates ATP.

The protein belongs to the DNA mismatch repair MutS family.

Its function is as follows. This protein is involved in the repair of mismatches in DNA. It is possible that it carries out the mismatch recognition step. This protein has a weak ATPase activity. The chain is DNA mismatch repair protein MutS from Leptospira interrogans serogroup Icterohaemorrhagiae serovar copenhageni (strain Fiocruz L1-130).